The primary structure comprises 496 residues: Angiopoietin-2 (496 aa).

The signal sequence occupies residues 1 to 18 (MWQLVFLTLSCDLAVATA). N-linked (GlcNAc...) asparagine glycosylation is found at Asn-90, Asn-120, Asn-134, Asn-152, Asn-241, and Asn-304. Residues 167-249 (STNKLEKQIL…VNNSVLQKQQ (83 aa)) are a coiled coil. The 221-residue stretch at 275 to 495 (KDEQIIFRDC…ATTMMIRPAD (221 aa)) folds into the Fibrinogen C-terminal domain. A disulfide bridge links Cys-284 with Cys-313. Ca(2+)-binding residues include Asp-429, Asp-431, Cys-433, and Cys-435. Disulfide bonds link Cys-433–Cys-435 and Cys-437–Cys-450.

As to quaternary structure, interacts with TEK/TIE2, competing for the same binding site as ANGPT1. Interacts with ITGA5. Interacts with SVEP1/polydom. Interacts with THBD; this interaction significantly inhibits the generation of activated PC and TAFIa/CPB2 by the thrombin/thrombomodulin complex.

Its subcellular location is the secreted. Binds to TEK/TIE2, competing for the ANGPT1 binding site, and modulating ANGPT1 signaling. Can induce tyrosine phosphorylation of TEK/TIE2 in the absence of ANGPT1. In the absence of angiogenic inducers, such as VEGF, ANGPT2-mediated loosening of cell-matrix contacts may induce endothelial cell apoptosis with consequent vascular regression. In concert with VEGF, it may facilitate endothelial cell migration and proliferation, thus serving as a permissive angiogenic signal. Involved in the regulation of lymphangiogenesis. In Bos taurus (Bovine), this protein is Angiopoietin-2 (ANGPT2).